A 90-amino-acid polypeptide reads, in one-letter code: Small ribosomal subunit protein uS15c (90 aa).

The protein belongs to the universal ribosomal protein uS15 family. As to quaternary structure, part of the 30S ribosomal subunit.

It is found in the plastid. It localises to the chloroplast. This chain is Small ribosomal subunit protein uS15c (rps15), found in Populus alba (White poplar).